The following is a 312-amino-acid chain: tRNA-dihydrouridine(16) synthase (312 aa).

FMN is bound by residues 7 to 9 (PMQ) and Q68. C98 acts as the Proton donor in catalysis. FMN-binding positions include K139, 200 to 202 (NGE), and 224 to 225 (GR).

The protein belongs to the Dus family. DusC subfamily. Requires FMN as cofactor.

The catalysed reaction is 5,6-dihydrouridine(16) in tRNA + NADP(+) = uridine(16) in tRNA + NADPH + H(+). It carries out the reaction 5,6-dihydrouridine(16) in tRNA + NAD(+) = uridine(16) in tRNA + NADH + H(+). Its function is as follows. Catalyzes the synthesis of 5,6-dihydrouridine (D), a modified base found in the D-loop of most tRNAs, via the reduction of the C5-C6 double bond in target uridines. Specifically modifies U16 in tRNAs. This Pasteurella multocida (strain Pm70) protein is tRNA-dihydrouridine(16) synthase.